The primary structure comprises 187 residues: Threonylcarbamoyl-AMP synthase (187 aa).

The YrdC-like domain occupies 4–187 (TLTLSEAVTA…DARSGHILRL (184 aa)).

The protein belongs to the SUA5 family. TsaC subfamily.

The protein resides in the cytoplasm. It carries out the reaction L-threonine + hydrogencarbonate + ATP = L-threonylcarbamoyladenylate + diphosphate + H2O. Its function is as follows. Required for the formation of a threonylcarbamoyl group on adenosine at position 37 (t(6)A37) in tRNAs that read codons beginning with adenine. Catalyzes the conversion of L-threonine, HCO(3)(-)/CO(2) and ATP to give threonylcarbamoyl-AMP (TC-AMP) as the acyladenylate intermediate, with the release of diphosphate. This is Threonylcarbamoyl-AMP synthase from Xylella fastidiosa (strain 9a5c).